Here is a 275-residue protein sequence, read N- to C-terminus: NH(3)-dependent NAD(+) synthetase (275 aa).

47–54 (GISGGQDS) lines the ATP pocket. A Mg(2+)-binding site is contributed by Asp-53. Deamido-NAD(+) is bound at residue Arg-141. Thr-161 lines the ATP pocket. Residue Glu-166 participates in Mg(2+) binding. 2 residues coordinate deamido-NAD(+): Lys-174 and Asp-181. The ATP site is built by Lys-190 and Thr-212. Position 261 to 262 (261 to 262 (HK)) interacts with deamido-NAD(+).

It belongs to the NAD synthetase family. As to quaternary structure, homodimer.

It carries out the reaction deamido-NAD(+) + NH4(+) + ATP = AMP + diphosphate + NAD(+) + H(+). Its pathway is cofactor biosynthesis; NAD(+) biosynthesis; NAD(+) from deamido-NAD(+) (ammonia route): step 1/1. Functionally, catalyzes the ATP-dependent amidation of deamido-NAD to form NAD. Uses ammonia as a nitrogen source. The chain is NH(3)-dependent NAD(+) synthetase from Lacticaseibacillus paracasei (strain ATCC 334 / BCRC 17002 / CCUG 31169 / CIP 107868 / KCTC 3260 / NRRL B-441) (Lactobacillus paracasei).